Here is a 736-residue protein sequence, read N- to C-terminus: Catalase-peroxidase (736 aa).

Positions 1-21 (MFKKTILSFVISAVMVTAASA) are cleaved as a signal peptide. Residues 102–224 (WHAAGTYRTH…LAAVEMGLIY (123 aa)) constitute a cross-link (tryptophyl-tyrosyl-methioninium (Trp-Tyr) (with M-250)). His-103 functions as the Proton acceptor in the catalytic mechanism. A cross-link (tryptophyl-tyrosyl-methioninium (Tyr-Met) (with W-102)) is located at residues 224–250 (YVNPVGPHGNPDPLLAANDIRMSFGRM). His-265 contributes to the heme b binding site.

Belongs to the peroxidase family. Peroxidase/catalase subfamily. Homodimer or homotetramer. It depends on heme b as a cofactor. Formation of the three residue Trp-Tyr-Met cross-link is important for the catalase, but not the peroxidase activity of the enzyme.

It catalyses the reaction H2O2 + AH2 = A + 2 H2O. The catalysed reaction is 2 H2O2 = O2 + 2 H2O. Bifunctional enzyme with both catalase and broad-spectrum peroxidase activity. The protein is Catalase-peroxidase of Shewanella woodyi (strain ATCC 51908 / MS32).